Here is a 466-residue protein sequence, read N- to C-terminus: A-type ATP synthase subunit B (466 aa).

Belongs to the ATPase alpha/beta chains family. In terms of assembly, has multiple subunits with at least A(3), B(3), C, D, E, F, H, I and proteolipid K(x).

Its subcellular location is the cell membrane. Functionally, component of the A-type ATP synthase that produces ATP from ADP in the presence of a proton gradient across the membrane. The B chain is a regulatory subunit. In Sulfolobus acidocaldarius (strain ATCC 33909 / DSM 639 / JCM 8929 / NBRC 15157 / NCIMB 11770), this protein is A-type ATP synthase subunit B.